The primary structure comprises 424 residues: Histidine--tRNA ligase (424 aa).

Belongs to the class-II aminoacyl-tRNA synthetase family. In terms of assembly, homodimer.

The protein resides in the cytoplasm. It catalyses the reaction tRNA(His) + L-histidine + ATP = L-histidyl-tRNA(His) + AMP + diphosphate + H(+). This Shewanella pealeana (strain ATCC 700345 / ANG-SQ1) protein is Histidine--tRNA ligase.